We begin with the raw amino-acid sequence, 648 residues long: Cell surface glycoprotein MUC18 (648 aa).

An N-terminal signal peptide occupies residues 1 to 23; sequence MGLPRLVCAFLFAACCCCRSATG. 2 Ig-like V-type domains span residues 24 to 131 and 141 to 244; these read VPGE…HYVQ and PTIQ…KEVT. Over 24–560 the chain is Extracellular; sequence VPGEEKQPTP…EKKLPQQESK (537 aa). 5 disulfide bridges follow: C50/C118, C163/C225, C274/C322, C367/C409, and C454/C501. A glycan (N-linked (GlcNAc...) asparagine) is linked at N58. Ig-like C2-type domains follow at residues 246-332, 337-426, and 432-512; these read PVLY…TTVM, PLEL…RRVS, and SPWM…SNTT. The tract at residues 282 to 304 is disordered; that stretch reads PHFTINKKNPSTEEMEEESTDEN. N510 carries an N-linked (GlcNAc...) asparagine glycan. Residues 527-549 are compositionally biased toward polar residues; it reads DSSQTTGLSTPTVSPHSRANSTS. Residues 527-554 are disordered; the sequence is DSSQTTGLSTPTVSPHSRANSTSTEKKL. The helical transmembrane segment at 561–581 threads the bilayer; it reads GVVIVAVIVCTLVLAVLGATL. The Cytoplasmic segment spans residues 582-648; the sequence is YYFYKKGKLP…QGEKYIDLRH (67 aa). Phosphoserine occurs at positions 608 and 616. Positions 626 to 648 are disordered; the sequence is LQGSNGDKRAPGDQGEKYIDLRH. Basic and acidic residues predominate over residues 631–648; it reads GDKRAPGDQGEKYIDLRH.

As to expression, detected in lung, uterus and placenta (at protein level). Detected in heart, lung, kidney, adrenal gland, intestine, testis, skeletal muscle and aorta. Detected at low levels in adult brain, in particular in brain stem and spinal cord, but also in hippocampus, olfactory bulb and striatum (at protein level).

The protein localises to the cell membrane. It is found in the perikaryon. Its function is as follows. Plays a role in cell adhesion, and in cohesion of the endothelial monolayer at intercellular junctions in vascular tissue. Its expression may allow melanoma cells to interact with cellular elements of the vascular system, thereby enhancing hematogeneous tumor spread. Could be an adhesion molecule active in neural crest cells during embryonic development. Acts as a surface receptor that triggers tyrosine phosphorylation of FYN and PTK2/FAK1, and a transient increase in the intracellular calcium concentration. The polypeptide is Cell surface glycoprotein MUC18 (Mcam) (Rattus norvegicus (Rat)).